We begin with the raw amino-acid sequence, 302 residues long: Ribosomal RNA small subunit methyltransferase H (302 aa).

Residues 32 to 34 (GGH), D51, F78, D97, and Q104 contribute to the S-adenosyl-L-methionine site.

It belongs to the methyltransferase superfamily. RsmH family.

It localises to the cytoplasm. It catalyses the reaction cytidine(1402) in 16S rRNA + S-adenosyl-L-methionine = N(4)-methylcytidine(1402) in 16S rRNA + S-adenosyl-L-homocysteine + H(+). Its function is as follows. Specifically methylates the N4 position of cytidine in position 1402 (C1402) of 16S rRNA. The polypeptide is Ribosomal RNA small subunit methyltransferase H (Nitratiruptor sp. (strain SB155-2)).